The primary structure comprises 323 residues: Prenyl transferase (323 aa).

The isopentenyl diphosphate site is built by Lys46, Arg49, and His81. Residues Asp88 and Asp92 each contribute to the Mg(2+) site. Arg97 contacts an all-trans-polyprenyl diphosphate. Arg98 is a binding site for isopentenyl diphosphate. An all-trans-polyprenyl diphosphate contacts are provided by Lys174, Thr175, and Gln212.

It belongs to the FPP/GGPP synthase family. The cofactor is Mg(2+).

In terms of biological role, possible role in synthesis of the nonaprenyl side chain of plastoquinone or in synthesis of other prenyl chains such as undekaprenyl pyrophosphate. This chain is Prenyl transferase (preA), found in Synechocystis sp. (strain ATCC 27184 / PCC 6803 / Kazusa).